Here is an 848-residue protein sequence, read N- to C-terminus: DNA mismatch repair protein MutS (848 aa).

ATP is bound at residue 605–612; the sequence is GPNMAGKS.

This sequence belongs to the DNA mismatch repair MutS family.

Its function is as follows. This protein is involved in the repair of mismatches in DNA. It is possible that it carries out the mismatch recognition step. This protein has a weak ATPase activity. The protein is DNA mismatch repair protein MutS of Leptospira interrogans serogroup Icterohaemorrhagiae serovar Lai (strain 56601).